We begin with the raw amino-acid sequence, 151 residues long: Methylated-DNA--protein-cysteine methyltransferase (151 aa).

Catalysis depends on cysteine 119, which acts as the Nucleophile; methyl group acceptor.

This sequence belongs to the MGMT family.

The protein resides in the cytoplasm. The enzyme catalyses a 6-O-methyl-2'-deoxyguanosine in DNA + L-cysteinyl-[protein] = S-methyl-L-cysteinyl-[protein] + a 2'-deoxyguanosine in DNA. The catalysed reaction is a 4-O-methyl-thymidine in DNA + L-cysteinyl-[protein] = a thymidine in DNA + S-methyl-L-cysteinyl-[protein]. Functionally, involved in the cellular defense against the biological effects of O6-methylguanine (O6-MeG) and O4-methylthymine (O4-MeT) in DNA. Repairs the methylated nucleobase in DNA by stoichiometrically transferring the methyl group to a cysteine residue in the enzyme. This is a suicide reaction: the enzyme is irreversibly inactivated. This Saccharolobus islandicus (strain L.S.2.15 / Lassen #1) (Sulfolobus islandicus) protein is Methylated-DNA--protein-cysteine methyltransferase.